A 394-amino-acid chain; its full sequence is Zinc finger and SCAN domain-containing protein 9 (394 aa).

Lys-26 participates in a covalent cross-link: Glycyl lysine isopeptide (Lys-Gly) (interchain with G-Cter in SUMO2). Positions 52-134 (RRHFRQLCYQ…ILLEDLEREL (83 aa)) constitute an SCAN box domain. Glycyl lysine isopeptide (Lys-Gly) (interchain with G-Cter in SUMO2) cross-links involve residues Lys-215 and Lys-238. 5 C2H2-type zinc fingers span residues 254 to 276 (HKCDECGKSFTQSSGLIRHQRIH), 282 to 304 (YECNECGKAFSRSSGLFNHRGIH), 310 to 332 (YHCKECGKVFSQSAGLIQHQRIH), 338 to 360 (YQCSQCSKSYSRRSFLIEHQRSH), and 366 to 388 (HQCIECGKSFNRHCNLIRHQKIH).

Belongs to the krueppel C2H2-type zinc-finger protein family.

Its subcellular location is the nucleus. Functionally, may be involved in transcriptional regulation. This Homo sapiens (Human) protein is Zinc finger and SCAN domain-containing protein 9 (ZSCAN9).